The following is a 442-amino-acid chain: 5-methylthioadenosine/S-adenosylhomocysteine deaminase (442 aa).

Residues His-70 and His-72 each coordinate Zn(2+). Glu-99 and His-191 together coordinate substrate. His-218 contacts Zn(2+). 2 residues coordinate substrate: Glu-221 and Asp-306. Zn(2+) is bound at residue Asp-306.

It belongs to the metallo-dependent hydrolases superfamily. MTA/SAH deaminase family. The cofactor is Zn(2+).

The catalysed reaction is S-adenosyl-L-homocysteine + H2O + H(+) = S-inosyl-L-homocysteine + NH4(+). It catalyses the reaction S-methyl-5'-thioadenosine + H2O + H(+) = S-methyl-5'-thioinosine + NH4(+). In terms of biological role, catalyzes the deamination of 5-methylthioadenosine and S-adenosyl-L-homocysteine into 5-methylthioinosine and S-inosyl-L-homocysteine, respectively. Is also able to deaminate adenosine. The protein is 5-methylthioadenosine/S-adenosylhomocysteine deaminase of Nitratidesulfovibrio vulgaris (strain ATCC 29579 / DSM 644 / CCUG 34227 / NCIMB 8303 / VKM B-1760 / Hildenborough) (Desulfovibrio vulgaris).